A 108-amino-acid chain; its full sequence is Nucleoid-associated protein BTH_I2220 (108 aa).

The protein belongs to the YbaB/EbfC family. Homodimer.

The protein resides in the cytoplasm. It is found in the nucleoid. Functionally, binds to DNA and alters its conformation. May be involved in regulation of gene expression, nucleoid organization and DNA protection. The sequence is that of Nucleoid-associated protein BTH_I2220 from Burkholderia thailandensis (strain ATCC 700388 / DSM 13276 / CCUG 48851 / CIP 106301 / E264).